A 313-amino-acid polypeptide reads, in one-letter code: MEAIGVLMMCPMSTYLEQELDKRFKLFRYWTQPAQRDFLALQAESIRAVVGNSNAGADAELIDALPKLEIVSSFSVGLDKVDLIKCEEKGVRVTNTPDVLTDDVADLAIGLILAVLRRICECDKYVRRGAWKFGDFKLTTKFSGKRVGIIGLGRIGLAVAERAEAFDCPISYFSRSKKPNTNYTYYGSVVELASNSDILVVACPLTPETTHIINREVIDALGPKGVLINIGRGPHVDEPELVSALVEGRLGGAGLDVFEREPEVPEKLFGLENVVLLPHVGSGTVETRKVMADLVVGNLEAHFSGKPLLTPVV.

Residues 152 to 155 (LGRI), 174 to 176 (SRS), and I230 contribute to the NADP(+) site. The active site involves R232. NADP(+) is bound at residue D256. The active site involves E261. Residue H279 is the Proton donor of the active site.

It belongs to the D-isomer specific 2-hydroxyacid dehydrogenase family.

It carries out the reaction (2R)-2-hydroxy-3-(4-hydroxyphenyl)propanoate + NAD(+) = 3-(4-hydroxyphenyl)pyruvate + NADH + H(+). The catalysed reaction is (2R)-2-hydroxy-3-(4-hydroxyphenyl)propanoate + NADP(+) = 3-(4-hydroxyphenyl)pyruvate + NADPH + H(+). It catalyses the reaction (2R)-3-(3,4-dihydroxyphenyl)lactate + NADP(+) = 3-(3,4-dihydroxyphenyl)pyruvate + NADPH + H(+). The enzyme catalyses (2R)-3-(3,4-dihydroxyphenyl)lactate + NAD(+) = 3-(3,4-dihydroxyphenyl)pyruvate + NADH + H(+). In terms of biological role, catalyzes the NAD(P)H-dependent reduction of 4-hydroxyphenylpyruvate to 4-hydroxyphenyllactate and 3,4-dihydroxyphenylpyruvate to 3,4-dihydroxyphenyllactate in the biosynthesis of rosmarinic acid. Rosmarinic acid is an ester of caffeic acid and 3,4-dihydroxyphenyllactic acid. NADP is the preferred substrate. This is Hydroxyphenylpyruvate reductase (HPPR) from Plectranthus scutellarioides (Coleus).